The chain runs to 475 residues: Peripherin (475 aa).

The tract at residues 1 to 42 is disordered; the sequence is MPSSASMSHHHSSGLRSSISSTSYRRTFGPPPSLSPGAFSYS. Residues 1–103 are head; that stretch reads MPSSASMSHH…FLATRSNEKQ (103 aa). A compositionally biased stretch (low complexity) spans 14-26; it reads GLRSSISSTSYRR. Y24 bears the 3'-nitrotyrosine mark. Phosphoserine is present on residues S35 and S57. S66 bears the Phosphoserine; by PKB/AKT1 mark. The 311-residue stretch at 101–411 folds into the IF rod domain; sequence EKQELQELND…KLLEGEESRI (311 aa). Positions 104 to 136 are coil 1A; sequence ELQELNDRFANFIEKVRFLEQQNAALRGELSQA. Positions 137 to 147 are linker 1; it reads RGQEPARADQL. The interval 148 to 243 is coil 1B; the sequence is CQQELRELRR…KLHEEELRDL (96 aa). Residues 244-266 are linker 2; it reads QVSVESQQVQQVEVEATVKPELT. The tract at residues 267-409 is coil 2; the sequence is AALRDIRAQY…YRKLLEGEES (143 aa). Y383 carries the post-translational modification 3'-nitrotyrosine. The tract at residues 410-475 is tail; the sequence is RISVPVHSFA…DLDKSSIHSY (66 aa). Residues 453–475 are disordered; that stretch reads EKVVTESQKEQHSDLDKSSIHSY. Y475 carries the post-translational modification Phosphotyrosine.

It belongs to the intermediate filament family. In terms of assembly, forms homodimers (in vitro). Homopolymerizes into a filamentous network (in vitro). Forms heterodimers with NEFL, NEFM or NEFH (in vitro). Interacts with DST (via C-terminus). Interacts with RAB7A; the interaction is direct. Interacts with PRKCE (via phorbol-ester/DAG-type 2 domain). Phosphorylated; phosphorylation increases after nerve injury in regenerating neurons. Expressed in the sciatic nerve and at very low levels in the central nervous system (at protein level). Expressed in the spinal cord, in the sciatic nerve at the level of the dorsal root ganglion and in trigeminal nerves (at protein level). Expressed in the cranial nerves in the hindbrain, including the sensory and motor trigeminal neurons, the mesencephalic trigeminal neurons, the spinal trigeminal neurons, and in the facial nerve (at protein level). Expressed in the cerebellum, with expression in the inferior cerebellar peduncle and the lateral deep cerebellar nucleus (at protein level). Expressed in vestibulocochlear neurons, such as the anteroventral cochlear nucleus, the dorsal cochlear nucleus, the superficial granule cell layer and the granule cell lamina (at protein level). Expressed in glossopharyngeal, vagal and hypoglossal neurons (at protein level). Expressed in peripheral sensory neurons, in the dorsal root ganglia and the spinal cord, and to a lower extent in motor neurons. Expressed in the optic tract of the central nervous system, especially in the lateral geniculate nucleus and the superior colliculus. Expressed in neurons of the pineal stalk in the cortex. Expressed in the spinal trigeminal tract of the midbrain, in the medulla and in the medial cerebellar peduncle.

The protein localises to the cytoplasm. Its subcellular location is the cytoskeleton. It localises to the cell projection. It is found in the axon. The protein resides in the perikaryon. Its function is as follows. Class-III neuronal intermediate filament protein. May form an independent structural network without the involvement of other neurofilaments or may cooperate with the neuronal intermediate filament proteins NEFL, NEFH, NEFM and INA to form filamentous networks. Assembly of the neuronal intermediate filaments may be regulated by RAB7A. Plays a role in the development of unmyelinated sensory neurons. May be involved in axon elongation and axon regeneration after injury. Inhibits neurite extension in type II spiral ganglion neurons in the cochlea. In Mus musculus (Mouse), this protein is Peripherin (Prph).